We begin with the raw amino-acid sequence, 973 residues long: Leucine--tRNA ligase, chloroplastic/mitochondrial (973 aa).

Residues 126-135 (PSGAGLHVGH) carry the 'HIGH' region motif. The 'KMSKS' region signature appears at 730 to 734 (KMSKS). Residue lysine 733 coordinates ATP.

Belongs to the class-I aminoacyl-tRNA synthetase family.

It is found in the plastid. Its subcellular location is the chloroplast. It localises to the mitochondrion. The catalysed reaction is tRNA(Leu) + L-leucine + ATP = L-leucyl-tRNA(Leu) + AMP + diphosphate. Its function is as follows. Catalyzes the specific attachment of an amino acid to its cognate tRNA in a two step reaction: the amino acid (AA) is first activated by ATP to form AA-AMP and then transferred to the acceptor end of the tRNA. The sequence is that of Leucine--tRNA ligase, chloroplastic/mitochondrial from Arabidopsis thaliana (Mouse-ear cress).